A 576-amino-acid chain; its full sequence is MAGUK p55 subfamily member 7 (576 aa).

2 L27 domains span residues 10–64 (SEMG…EDCA) and 65–122 (PTPV…YDPE). Residues 139 to 220 (IIRLVKNKEP…AITFKVVPGI (82 aa)) enclose the PDZ domain. Positions 228 to 298 (EPKMFIKALF…PSKHFQERRL (71 aa)) constitute an SH3 domain. The Guanylate kinase-like domain maps to 368–560 (HRLVVLVGPT…AFSELKQALK (193 aa)).

This sequence belongs to the MAGUK family.

Its subcellular location is the membrane. The protein localises to the cell junction. The protein resides in the tight junction. It localises to the adherens junction. Acts as an important adapter that promotes epithelial cell polarity and tight junction formation. Involved in the assembly of protein complexes at sites of cell-cell contact. This is MAGUK p55 subfamily member 7 (mpp7) from Danio rerio (Zebrafish).